A 187-amino-acid chain; its full sequence is uncharacterized protein (187 aa).

This is an uncharacterized protein from Dictyostelium discoideum (Social amoeba).